Here is a 319-residue protein sequence, read N- to C-terminus: Oxaloacetate tautomerase fahd2, mitochondrial (319 aa).

A mitochondrion-targeting transit peptide spans 1-31 (MLTQTRVALRVLKNAHLTLPKRNISQSPALS). Positions 164, 166, and 195 each coordinate Mg(2+).

Belongs to the FAH family. It depends on Mg(2+) as a cofactor. Mn(2+) serves as cofactor.

The protein localises to the mitochondrion. The catalysed reaction is oxaloacetate = enol-oxaloacetate. Functionally, tautomerase that converts enol-oxaloacetate, a strong inhibitor of succinate dehydrogenase, to the physiological keto form of oxaloacetate. It is thereby required to maximize aerobic respiration efficiency by preventing succinate dehydrogenase inhibition. The polypeptide is Oxaloacetate tautomerase fahd2, mitochondrial (fahd2) (Xenopus laevis (African clawed frog)).